Here is a 258-residue protein sequence, read N- to C-terminus: Small ribosomal subunit protein uS2 (258 aa).

The disordered stretch occupies residues 222–258 (GKALRDQDEAEQVEPVSQEEKDEVVAEAMSEADFEEQ).

The protein belongs to the universal ribosomal protein uS2 family.

The sequence is that of Small ribosomal subunit protein uS2 from Campylobacter fetus subsp. fetus (strain 82-40).